A 91-amino-acid chain; its full sequence is MTDYKNGIKKLLQKCFSDKSIDVIFMSCNNLSPHKDYMIIDPETKYYIGYILTNGIKIPFIAEVWHNNTTRIYLDPRKNFYLALFIGDLNV.

This is an uncharacterized protein from Saccharolobus islandicus (Sulfolobus islandicus).